The following is a 265-amino-acid chain: MSLALLCSLLLVHGSLGEIVFRCPSCTAERQAACPKLTTSCEIVREPGCGCCPVCARQKGELCGVYTTRCGSGLRCYPSANSELPLEQLIQGLGRCENKVDLEPTMTNQESAAHSGEVNGTRSPPMKKPGKDYQYIKEIAVNKHHNNKRTRMYNTQDDPKTPHPKQSQCQQELDKVLENISRMAFHDNKGPLENLYDLKFPNCDKTGQYNLKQCHMSTHGQRGECWCVNPYTGVQIPSSDKVRGDPNCSQYYGGPELEPPTAQQK.

The signal sequence occupies residues 1 to 17 (MSLALLCSLLLVHGSLG). Residues 19–99 (IVFRCPSCTA…IQGLGRCENK (81 aa)) form the IGFBP N-terminal domain. 6 disulfides stabilise this stretch: cysteine 23-cysteine 49, cysteine 26-cysteine 51, cysteine 34-cysteine 52, cysteine 41-cysteine 55, cysteine 63-cysteine 76, and cysteine 70-cysteine 96. A compositionally biased stretch (polar residues) spans 107 to 122 (TNQESAAHSGEVNGTR). 2 disordered regions span residues 107–128 (TNQE…PMKK) and 144–170 (HHNN…SQCQ). A Thyroglobulin type-1 domain is found at 166–248 (QSQCQQELDK…SDKVRGDPNC (83 aa)). 3 disulfide bridges follow: cysteine 169–cysteine 203, cysteine 214–cysteine 225, and cysteine 227–cysteine 248. Residues 238 to 265 (SSDKVRGDPNCSQYYGGPELEPPTAQQK) are disordered. Positions 243–245 (RGD) match the Cell attachment site motif.

As to quaternary structure, interacts with igf2. Interacts with igf1. In early embryos, expressed at a low level in most tissues with expression becoming abundant in the liver by 96 hours post-fertilization (hpf). The expression pattern in adults exhibits sexual dimorphism; in adult males expression is limited exclusively to the liver whereas in adult females expression is observed in the liver and other tissues including the gut, kidney, ovary and muscle.

It localises to the secreted. In terms of biological role, IGF-binding proteins prolong the half-life of the IGFs and have been shown to either inhibit or stimulate the growth promoting effects of the IGFs on cell culture. They alter the interaction of IGFs with their cell surface receptors. This chain is Insulin-like growth factor-binding protein 2-B, found in Danio rerio (Zebrafish).